The primary structure comprises 319 residues: MKKKKIGLLVMAYGTPESLDDVEAYYTHIRHGRKPSEEALEDLIGRYKAIGGISPLAKITKEQAHKLTDSMNNIFTEYEFTCYLGLKHTAPFIEDAVEEMKRNGIEQTISIVLAPHYSTFSIKAYNDRAIRLSKEIGGPVIESIEQWYDEPKFISYWADQIKETFTEIDDKEKAVVIFSAHSLPEKIIAAGDPYVEQLKHTADLIAEAANIQNYTIGWQSAGNTPDPWIGPDVQDLTKDLYEEHGYESFIYCPVGFVAEHLEVLYDNDYECKVVTDELNAKYFRPNMPNAQSAFIDCLAEIVSKKVKEIVDKDLVLNNN.

Fe-coproporphyrin III is bound by residues Tyr-13, Arg-30, 46 to 47 (RY), Ser-54, and Tyr-125. Fe(2+) is bound by residues His-181 and Glu-262.

It belongs to the ferrochelatase family.

It localises to the cytoplasm. It carries out the reaction Fe-coproporphyrin III + 2 H(+) = coproporphyrin III + Fe(2+). Its pathway is porphyrin-containing compound metabolism; protoheme biosynthesis. Functionally, involved in coproporphyrin-dependent heme b biosynthesis. Catalyzes the insertion of ferrous iron into coproporphyrin III to form Fe-coproporphyrin III. In Bacillus cereus (strain ATCC 14579 / DSM 31 / CCUG 7414 / JCM 2152 / NBRC 15305 / NCIMB 9373 / NCTC 2599 / NRRL B-3711), this protein is Coproporphyrin III ferrochelatase 2.